We begin with the raw amino-acid sequence, 406 residues long: RING finger protein PSH1 (406 aa).

The segment at 30 to 72 (CSICHDYMFVPMMTPCGHNYCYGCLNTWFASNTQKELACPQCR) adopts an RING-type zinc-finger fold. Phosphoserine is present on residues Ser143 and Ser191. The interval 209–406 (RFASTNPFAN…RVVLGDSDDE (198 aa)) is disordered. Composition is skewed to acidic residues over residues 223 to 232 (SSEDDDSSEE), 256 to 274 (AVDDEDDEEEDEEEEEEMD), and 281 to 291 (IEDDEDDEDED). The residue at position 310 (Thr310) is a Phosphothreonine. A Phosphoserine modification is found at Ser403.

Interacts with POB3 and SPT16.

The protein resides in the nucleus. The sequence is that of RING finger protein PSH1 (PSH1) from Saccharomyces cerevisiae (strain ATCC 204508 / S288c) (Baker's yeast).